The primary structure comprises 122 residues: S-protein homolog 23 (122 aa).

A signal peptide spans 1 to 20 (MQNLSILLVCSFCILGHVSS). N-linked (GlcNAc...) asparagine glycosylation is present at Asn86.

This sequence belongs to the plant self-incompatibility (S1) protein family.

Its subcellular location is the secreted. This is S-protein homolog 23 from Arabidopsis thaliana (Mouse-ear cress).